A 200-amino-acid chain; its full sequence is Recombination protein RecR (200 aa).

The C4-type zinc finger occupies 58 to 75 (CPCCFCLKNFPESQCEFC). Residues 82-177 (STLCIVASPK…SISRLALGLP (96 aa)) enclose the Toprim domain.

The protein belongs to the RecR family.

Its function is as follows. May play a role in DNA repair. It seems to be involved in an RecBC-independent recombinational process of DNA repair. It may act with RecF and RecO. The polypeptide is Recombination protein RecR (Chlamydia felis (strain Fe/C-56) (Chlamydophila felis)).